We begin with the raw amino-acid sequence, 194 residues long: dTTP/UTP pyrophosphatase (194 aa).

Asp-76 serves as the catalytic Proton acceptor.

Belongs to the Maf family. YhdE subfamily. It depends on a divalent metal cation as a cofactor.

It is found in the cytoplasm. It catalyses the reaction dTTP + H2O = dTMP + diphosphate + H(+). The enzyme catalyses UTP + H2O = UMP + diphosphate + H(+). In terms of biological role, nucleoside triphosphate pyrophosphatase that hydrolyzes dTTP and UTP. May have a dual role in cell division arrest and in preventing the incorporation of modified nucleotides into cellular nucleic acids. The sequence is that of dTTP/UTP pyrophosphatase from Shewanella sp. (strain MR-7).